We begin with the raw amino-acid sequence, 88 residues long: Small ribosomal subunit protein bS20 (88 aa).

Residues 1–28 (MANTVQARKRARQAVKQNEHNSSLRSKL) are disordered.

Belongs to the bacterial ribosomal protein bS20 family.

Its function is as follows. Binds directly to 16S ribosomal RNA. The polypeptide is Small ribosomal subunit protein bS20 (Polynucleobacter necessarius subsp. necessarius (strain STIR1)).